Here is a 414-residue protein sequence, read N- to C-terminus: Ornithine aminotransferase (414 aa).

Cys-154 and Cys-163 are oxidised to a cystine. Position 262 is an N6-(pyridoxal phosphate)lysine (Lys-262).

Belongs to the class-III pyridoxal-phosphate-dependent aminotransferase family. As to quaternary structure, homodimer. Requires pyridoxal 5'-phosphate as cofactor. In terms of processing, the disulfide bond between Cys-154 and Cys-163 is reduced by TRX1 which increases OAT catalytic activity.

Its subcellular location is the cytoplasm. It carries out the reaction a 2-oxocarboxylate + L-ornithine = L-glutamate 5-semialdehyde + an L-alpha-amino acid. The enzyme catalyses L-ornithine + 2-oxoglutarate = L-glutamate 5-semialdehyde + L-glutamate. The protein operates within amino-acid biosynthesis; L-proline biosynthesis; L-glutamate 5-semialdehyde from L-ornithine: step 1/1. Unlike for mammalian OATs, activity is increased by TRX1-mediated reduction of the disulfide bond between Cys-154 and Cys-163. Binding to TRX1 may also induce conformational changes that facilitate substrate binding. The enzyme has a very narrow substrate specificity and can only catalyze the transamination of alpha-ketoglutarate with ornithine or N-acetylornithine and, to a lesser extent, of glutamate-5-semialdehyde with glutamate and alanine. The polypeptide is Ornithine aminotransferase (Plasmodium falciparum (isolate 3D7)).